Reading from the N-terminus, the 348-residue chain is Quinolinate synthase (348 aa).

2 residues coordinate iminosuccinate: His47 and Ser68. Residue Cys113 participates in [4Fe-4S] cluster binding. Residues 139 to 141 and Ser156 contribute to the iminosuccinate site; that span reads YAN. Position 200 (Cys200) interacts with [4Fe-4S] cluster. Residues 226–228 and Thr243 each bind iminosuccinate; that span reads HPE. Residue Cys297 participates in [4Fe-4S] cluster binding.

The protein belongs to the quinolinate synthase family. Type 1 subfamily. The cofactor is [4Fe-4S] cluster.

Its subcellular location is the cytoplasm. It carries out the reaction iminosuccinate + dihydroxyacetone phosphate = quinolinate + phosphate + 2 H2O + H(+). The protein operates within cofactor biosynthesis; NAD(+) biosynthesis; quinolinate from iminoaspartate: step 1/1. In terms of biological role, catalyzes the condensation of iminoaspartate with dihydroxyacetone phosphate to form quinolinate. The protein is Quinolinate synthase of Sodalis glossinidius (strain morsitans).